Consider the following 213-residue polypeptide: MGREFLSLFDHWADSYDDTVSGHDEQYEEVFRRYSVILKEIVHRAGQHVLEFGSGTGNLTAALLAADKNVFGVEPSDAMKKAALQKGIPDVFHDGDFLSFPAPPFEPDTIVSSYAFHHLTDEEKKQAIHTYSNILHSDGKIVFADTMFQNQSAHQAEIDKAKAAGFDQLAEDLETEYYPSIDVLKQIFEEEGFSTSFHQMNDFVWIVEAKKRE.

S-adenosyl-L-methionine-binding residues include Gly-53, Glu-74, and Asp-96.

This sequence belongs to the methyltransferase superfamily. YrrT family.

Its function is as follows. Could be a S-adenosyl-L-methionine-dependent methyltransferase. This is an uncharacterized protein from Bacillus pumilus (strain SAFR-032).